A 221-amino-acid polypeptide reads, in one-letter code: Sperm acrosome membrane-associated protein 3 (221 aa).

Topologically, residues 1–69 (MGICMSMYTQ…EARSRAPRRQ (69 aa)) are cytoplasmic. A helical; Signal-anchor for type II membrane protein transmembrane segment spans residues 70–90 (LCPPGITWLALAYLLSCLLAS). Topologically, residues 91–221 (SKAKVFSRCE…LSDWVDGCDF (131 aa)) are extracellular. Positions 94–221 (KVFSRCELAK…LSDWVDGCDF (128 aa)) constitute a C-type lysozyme domain. Intrachain disulfides connect C99–C219, C123–C207, C157–C172, and C168–C186.

Belongs to the glycosyl hydrolase 22 family. In terms of assembly, interacts with ASTL. As to expression, the processed form is expressed in sperm (at protein level). Expressed strongly in testis and epididymis and weakly in pancreas.

The protein localises to the cytoplasmic vesicle. It is found in the secretory vesicle. Its subcellular location is the acrosome membrane. The protein resides in the secreted. Its function is as follows. Sperm surface membrane protein that may be involved in sperm-egg plasma membrane adhesion and fusion during fertilization. It could be a potential receptor for the egg oligosaccharide residue N-acetylglucosamine, which is present in the extracellular matrix over the egg plasma membrane. The processed form has no detectable bacteriolytic activity in vitro. This chain is Sperm acrosome membrane-associated protein 3 (Spaca3), found in Mus musculus (Mouse).